The following is a 363-amino-acid chain: MTSEQTLLVLGIETTCDETAAAVVERRADGSGRILSNIVRSQTDEHAPFGGVVPEIAARAHVDLLDGIVARAMREAGTGFPELSGVAAAAGPGLIGGVIVGLTTAKAIALVHNTPLIAVNHLEAHALTPRLTDATEFPYCLFLASGGHTQIVAVRGVGDYVRLGTTVDDAIGEAFDKIAKMLGLPYPGGPQVERAAASGDAVRFAFPRPMLGRPDANFSLSGLKTAVRNEASRLTPLEPQDINDLCAGFQAAVLDSMADRLTSGLRLFRERFGAPKALVAAGGVAANQAIRRALREVAAKAQTTLIVPPPALCTDNGAMIAWAGAERLALGLTDSMDAAPRARWLLDANATAPGKFANTRAGF.

Fe cation contacts are provided by histidine 121 and histidine 125. Substrate-binding positions include 143 to 147 (LASGG), aspartate 176, glycine 189, and asparagine 287. Aspartate 315 contacts Fe cation.

This sequence belongs to the KAE1 / TsaD family. It depends on Fe(2+) as a cofactor.

The protein resides in the cytoplasm. It carries out the reaction L-threonylcarbamoyladenylate + adenosine(37) in tRNA = N(6)-L-threonylcarbamoyladenosine(37) in tRNA + AMP + H(+). Its function is as follows. Required for the formation of a threonylcarbamoyl group on adenosine at position 37 (t(6)A37) in tRNAs that read codons beginning with adenine. Is involved in the transfer of the threonylcarbamoyl moiety of threonylcarbamoyl-AMP (TC-AMP) to the N6 group of A37, together with TsaE and TsaB. TsaD likely plays a direct catalytic role in this reaction. The chain is tRNA N6-adenosine threonylcarbamoyltransferase from Rhodopseudomonas palustris (strain HaA2).